The primary structure comprises 424 residues: UDP-N-acetylglucosamine 1-carboxyvinyltransferase (424 aa).

22–23 (KN) is a phosphoenolpyruvate binding site. A UDP-N-acetyl-alpha-D-glucosamine-binding site is contributed by Arg-93. Cys-117 acts as the Proton donor in catalysis. The residue at position 117 (Cys-117) is a 2-(S-cysteinyl)pyruvic acid O-phosphothioketal. UDP-N-acetyl-alpha-D-glucosamine is bound by residues 122 to 126 (RPIDL), Asp-307, and Val-329.

It belongs to the EPSP synthase family. MurA subfamily.

Its subcellular location is the cytoplasm. The catalysed reaction is phosphoenolpyruvate + UDP-N-acetyl-alpha-D-glucosamine = UDP-N-acetyl-3-O-(1-carboxyvinyl)-alpha-D-glucosamine + phosphate. The protein operates within cell wall biogenesis; peptidoglycan biosynthesis. In terms of biological role, cell wall formation. Adds enolpyruvyl to UDP-N-acetylglucosamine. The chain is UDP-N-acetylglucosamine 1-carboxyvinyltransferase from Chlorobium luteolum (strain DSM 273 / BCRC 81028 / 2530) (Pelodictyon luteolum).